The primary structure comprises 446 residues: Alkylglycerol monooxygenase (446 aa).

2 helical membrane-spanning segments follow: residues 39–59 and 103–123; these read VNQA…LGWL and FHFL…FLGV. Residues 117 to 248 enclose the Fatty acid hydroxylase domain; it reads WLAFLGVDMG…LIIWDRMFGT (132 aa). A Histidine box-1 motif is present at residues 131–135; that stretch reads HRFAH. A Histidine box-2 motif is present at residues 144 to 148; that stretch reads HQVHH. Residues 167–187 traverse the membrane as a helical segment; the sequence is FSSWIFYSPLALLIPPSVFAV. The Histidine box-3 signature appears at 220 to 224; sequence HRVHH. Transmembrane regions (helical) follow at residues 329-349, 362-382, and 410-430; these read AWSP…LDVY, LTVI…GFLI, and PLLP…TIYW.

Belongs to the sterol desaturase family. TMEM195 subfamily. It depends on Fe cation as a cofactor.

The protein resides in the endoplasmic reticulum membrane. It catalyses the reaction 1-O-(1,2-saturated-alkyl)-sn-glycerol + (6R)-L-erythro-5,6,7,8-tetrahydrobiopterin + O2 = a 1-(1-hydroxyalkyl)-sn-glycerol + (6R)-L-erythro-6,7-dihydrobiopterin + H2O. In terms of biological role, glyceryl-ether monooxygenase that cleaves the O-alkyl bond of ether lipids. Ether lipids are essential components of brain membranes. In Danio rerio (Zebrafish), this protein is Alkylglycerol monooxygenase (agmo).